The chain runs to 267 residues: MENLNALILGIIEGLTEFLPVSSTGHMILGTTILGIDIDEFWKSFLIIIQLGSILAVIFVFWRKLFQGLDIWLKLAAGFFPTGVIGLFVAKYLNALFNGWVVVGMLIFGGVVFILIELAHKNKQYRINSLEEISFKQAFCIGIFQSLAMIPGTSRSGASIIGGLLLGFNRKVAAEFSFLLAIPTMIIATAYSIYKEPELLSNANSLIPLGIGFITAFVVAVLVIKFFLKFISKFDFIPFGIYRIILGFVFFYLYYSGILNAGSEFKL.

A run of 7 helical transmembrane segments spans residues 7 to 29 (LILG…HMIL), 41 to 61 (FWKS…IFVF), 69 to 89 (LDIW…GLFV), 96 to 116 (LFNG…FILI), 173 to 193 (AAEF…AYSI), 207 to 227 (IPLG…IKFF), and 239 to 259 (FGIY…SGIL).

This sequence belongs to the UppP family.

The protein localises to the cell inner membrane. The enzyme catalyses di-trans,octa-cis-undecaprenyl diphosphate + H2O = di-trans,octa-cis-undecaprenyl phosphate + phosphate + H(+). Its function is as follows. Catalyzes the dephosphorylation of undecaprenyl diphosphate (UPP). Confers resistance to bacitracin. The chain is Undecaprenyl-diphosphatase from Campylobacter jejuni subsp. jejuni serotype O:6 (strain 81116 / NCTC 11828).